Reading from the N-terminus, the 374-residue chain is Lipoyl synthase, mitochondrial (374 aa).

The N-terminal 19 residues, 1 to 19 (MHSRSALLYRFLRPASRCF), are a transit peptide targeting the mitochondrion. Cys-103, Cys-108, Cys-114, Cys-134, Cys-138, Cys-141, and Ser-350 together coordinate [4Fe-4S] cluster. The region spanning 119 to 339 (ETGTATATIM…RLLGMEMGFR (221 aa)) is the Radical SAM core domain.

The protein belongs to the radical SAM superfamily. Lipoyl synthase family. Requires [4Fe-4S] cluster as cofactor. Expressed in leaves and flowers, but not in roots. Expressed in roots, rosette leaves, cauline leaves, stems, flowers and siliques.

It is found in the mitochondrion. It catalyses the reaction [[Fe-S] cluster scaffold protein carrying a second [4Fe-4S](2+) cluster] + N(6)-octanoyl-L-lysyl-[protein] + 2 oxidized [2Fe-2S]-[ferredoxin] + 2 S-adenosyl-L-methionine + 4 H(+) = [[Fe-S] cluster scaffold protein] + N(6)-[(R)-dihydrolipoyl]-L-lysyl-[protein] + 4 Fe(3+) + 2 hydrogen sulfide + 2 5'-deoxyadenosine + 2 L-methionine + 2 reduced [2Fe-2S]-[ferredoxin]. It functions in the pathway protein modification; protein lipoylation via endogenous pathway; protein N(6)-(lipoyl)lysine from octanoyl-[acyl-carrier-protein]: step 2/2. Its function is as follows. Catalyzes the radical-mediated insertion of two sulfur atoms into the C-6 and C-8 positions of the octanoyl moiety bound to the lipoyl domains of lipoate-dependent enzymes, thereby converting the octanoylated domains into lipoylated derivatives. Together with LIP2 is essential for mitochondrial protein lipoylation during seed development. Required for the lipoylation of mitochondrial pyruvate dehydrogenase component E2 proteins in leaves and roots. The chain is Lipoyl synthase, mitochondrial from Arabidopsis thaliana (Mouse-ear cress).